The primary structure comprises 500 residues: Cytochrome P450 71B35 (500 aa).

Residues 1–21 (MAHIWLLPLIFLVCILLAVFN) traverse the membrane as a helical segment. Residue Cys-439 coordinates heme.

Belongs to the cytochrome P450 family. The cofactor is heme.

Its subcellular location is the membrane. This chain is Cytochrome P450 71B35 (CYP71B35), found in Arabidopsis thaliana (Mouse-ear cress).